The chain runs to 2261 residues: Phospholipid-transporting ATPase ABCA1 (2261 aa).

Cysteine 3 carries the S-palmitoyl cysteine lipid modification. N-linked (GlcNAc...) asparagine glycosylation is present at asparagine 14. Residues 22–42 traverse the membrane as a helical segment; that stretch reads TCQLLLEVAWPLFIFLILISV. Cysteine 23 carries S-palmitoyl cysteine lipidation. Over 43-639 the chain is Extracellular; the sequence is RLSYPPYEQH…DIFLRVMSRS (597 aa). The segment at 69 to 80 is annulus domain 1; sequence WVQGIICNANNP. Cysteine 75 and cysteine 309 form a disulfide bridge. N-linked (GlcNAc...) asparagine glycans are attached at residues asparagine 98, asparagine 151, asparagine 161, asparagine 196, asparagine 244, asparagine 292, asparagine 337, and asparagine 349. Residues 368-379 are annulus domain 2; the sequence is SRIIWKALKPLL. N-linked (GlcNAc...) asparagine glycosylation is found at asparagine 400, asparagine 478, asparagine 489, and asparagine 521. A gateway domain region spans residues 564–594; sequence ERTNKIKDGYWDPGPRADPFEDMRYVWGGFA. 5 helical membrane passes run 640-660, 683-703, 716-736, 745-765, and 777-797; these read MPLF…KSIV, FSWF…LVVI, SVVF…CFLI, LAAA…VLCV, and IFAS…FALF. N-linked (GlcNAc...) asparagine glycosylation occurs at asparagine 820. The helical transmembrane segment at 827–847 threads the bilayer; it reads MMLFDTFLYGVMTWYIEAVFP. Positions 899 to 1131 constitute an ABC transporter 1 domain; sequence VSIQNLVKVY…LGTGYYLTLV (233 aa). 933-940 contacts ATP; that stretch reads GHNGAGKT. Residues 941 to 961 form a helical membrane-spanning segment; that stretch reads TTMSILTGLFPPTSGTAYILG. Serine 1042 carries the phosphoserine; by PKA modification. 2 S-palmitoyl cysteine lipidation sites follow: cysteine 1110 and cysteine 1111. 2 N-linked (GlcNAc...) asparagine glycosylation sites follow: asparagine 1144 and asparagine 1294. The interval 1285-1310 is disordered; that stretch reads FTEDDAVDPNDSDIDPESRETDLLSG. A compositionally biased stretch (acidic residues) spans 1287 to 1299; the sequence is EDDAVDPNDSDID. At serine 1296 the chain carries Phosphoserine. The helical transmembrane segment at 1351–1371 threads the bilayer; it reads IVLPAVFVCIALVFSLIVPPF. Over 1372–1656 the chain is Extracellular; the sequence is GKYPSLELQP…ALMTTSVDVL (285 aa). Residue asparagine 1453 is glycosylated (N-linked (GlcNAc...) asparagine). The cysteines at positions 1463 and 1477 are disulfide-linked. N-linked (GlcNAc...) asparagine glycosylation is found at asparagine 1499, asparagine 1504, and asparagine 1637. 6 helical membrane passes run 1657–1677, 1703–1723, 1735–1755, 1768–1788, 1802–1822, and 1852–1872; these read VSIC…VFLI, FVWD…IFIC, LPVL…LMYP, VVLT…TFVL, ILKS…LIDM, and NLFA…LIQY. The 233-residue stretch at 1912–2144 folds into the ABC transporter 2 domain; sequence LEIKELTKIY…FGDGYTIVVR (233 aa). Residue 1946-1953 participates in ATP binding; the sequence is GVNGAGKS. Asparagine 2044 carries N-linked (GlcNAc...) asparagine glycosylation. The residue at position 2054 (serine 2054) is a Phosphoserine; by PKA. Asparagine 2238 is a glycosylation site (N-linked (GlcNAc...) asparagine).

It belongs to the ABC transporter superfamily. ABCA family. In terms of assembly, interacts with MEGF10. May interact with APOE1; functionally associated with APOE1 in the biogenesis of HDLs. Interacts with ABCA8; this interaction potentiates cholesterol efflux. Interacts with ABCA12 and NR1H2; this interaction is required for ABCA1 localization to the cell surface and is necessary for its normal activity and stability. In terms of processing, phosphorylation on Ser-2054 regulates phospholipid efflux. Post-translationally, palmitoylated by ZDHHC8. Palmitoylation is essential for localization to the plasma membrane. As to expression, widely expressed in adult tissues. Highest levels are found in pregnant uterus and uterus.

Its subcellular location is the cell membrane. The protein localises to the endosome. It carries out the reaction ATP + H2O + phospholipidSide 1 = ADP + phosphate + phospholipidSide 2.. It catalyses the reaction a 1,2-diacyl-sn-glycero-3-phosphocholine(out) + ATP + H2O = a 1,2-diacyl-sn-glycero-3-phosphocholine(in) + ADP + phosphate + H(+). The catalysed reaction is a 1,2-diacyl-sn-glycero-3-phospho-L-serine(out) + ATP + H2O = a 1,2-diacyl-sn-glycero-3-phospho-L-serine(in) + ADP + phosphate + H(+). The enzyme catalyses a sphingomyelin(in) + ATP + H2O = a sphingomyelin(out) + ADP + phosphate + H(+). It carries out the reaction cholesterol(in) + ATP + H2O = cholesterol(out) + ADP + phosphate + H(+). ATPase activity is decreased by cholesterol and ceramide. ATPase activity is stimulated by phosphatidylcholine and to a lesser degree by phosphatidylserine and sphingomyelin. Phospholipid translocase activity is highly reduced by berylium fluoride and aluminum flouride and reduced by N-ethylmaleimide. In terms of biological role, catalyzes the translocation of specific phospholipids from the cytoplasmic to the extracellular/lumenal leaflet of membrane coupled to the hydrolysis of ATP. Thereby, participates in phospholipid transfer to apolipoproteins to form nascent high density lipoproteins/HDLs. Transports preferentially phosphatidylcholine over phosphatidylserine. May play a similar role in the efflux of intracellular cholesterol to apolipoproteins and the formation of nascent high density lipoproteins/HDLs. Translocates phospholipids from the outer face of the plasma membrane and forces it through its gateway and annulus into an elongated hydrophobic tunnel in its extracellular domain. This Mus musculus (Mouse) protein is Phospholipid-transporting ATPase ABCA1.